Reading from the N-terminus, the 399-residue chain is CCA-adding enzyme (399 aa).

ATP-binding residues include glycine 32 and arginine 35. Residues glycine 32 and arginine 35 each coordinate CTP. Aspartate 45 and aspartate 47 together coordinate Mg(2+). Residues arginine 116, aspartate 159, arginine 162, arginine 165, and arginine 168 each coordinate ATP. Arginine 116, aspartate 159, arginine 162, arginine 165, and arginine 168 together coordinate CTP.

This sequence belongs to the tRNA nucleotidyltransferase/poly(A) polymerase family. Bacterial CCA-adding enzyme type 3 subfamily. In terms of assembly, homodimer. It depends on Mg(2+) as a cofactor.

The enzyme catalyses a tRNA precursor + 2 CTP + ATP = a tRNA with a 3' CCA end + 3 diphosphate. It carries out the reaction a tRNA with a 3' CCA end + 2 CTP + ATP = a tRNA with a 3' CCACCA end + 3 diphosphate. Functionally, catalyzes the addition and repair of the essential 3'-terminal CCA sequence in tRNAs without using a nucleic acid template. Adds these three nucleotides in the order of C, C, and A to the tRNA nucleotide-73, using CTP and ATP as substrates and producing inorganic pyrophosphate. tRNA 3'-terminal CCA addition is required both for tRNA processing and repair. Also involved in tRNA surveillance by mediating tandem CCA addition to generate a CCACCA at the 3' terminus of unstable tRNAs. While stable tRNAs receive only 3'-terminal CCA, unstable tRNAs are marked with CCACCA and rapidly degraded. The sequence is that of CCA-adding enzyme from Streptococcus pneumoniae serotype 4 (strain ATCC BAA-334 / TIGR4).